The following is a 501-amino-acid chain: Xylulose kinase (501 aa).

81–82 is a substrate binding site; sequence MH. Asp239 functions as the Proton acceptor in the catalytic mechanism.

It belongs to the FGGY kinase family.

It carries out the reaction D-xylulose + ATP = D-xylulose 5-phosphate + ADP + H(+). Catalyzes the phosphorylation of D-xylulose to D-xylulose 5-phosphate. The polypeptide is Xylulose kinase (Lactococcus lactis subsp. lactis (strain IL1403) (Streptococcus lactis)).